A 614-amino-acid polypeptide reads, in one-letter code: MLCLGWVFLWFVAGEKTTGFNHSACATKKLLWTYSARGAENFVLFCDLQELQEQKFSHASQLSPTQSPAHKPCSGSQKDLSDVQWYMQPRSGSPLEEISRNSPHMQSEGMLHILAPQTNSIWSYICRPRIRSPQDMACCIKTVLEVKPQRNVSCGNTAQDEQVLLLGSTGSIHCPSLSCQSDVQSPEMTWYKDGRLLPEHKKNPIEMADIYVFNQGLYVCDYTQSDNVSSWTVRAVVKVRTIGKDINVKPEILDPITDTLDVELGKPLTLPCRVQFGFQRLSKPVIKWYVKESTQEWEMSVFEEKRIQSTFKNEVIERTIFLREVTQRDLSRKFVCFAQNSIGNTTRTIRLRKKEEVVFVYILLGTALMLVGVLVAAAFLYWYWIEVVLLCRTYKNKDETLGDKKEFDAFVSYSNWSSPETDAVGSLSEEHLALNLFPEVLEDTYGYRLCLLDRDVTPGGVYADDIVSIIKKSRRGIFILSPSYLNGPRVFELQAAVNLALVDQTLKLILIKFCSFQEPESLPYLVKKALRVLPTVTWKGLKSVHASSRFWTQIRYHMPVKNSNRFMFNGLRIFLKGFSPEKDLVTQKPLEGMPKSGNDHGAQNLLLYSDQKRC.

The signal sequence occupies residues 1 to 19 (MLCLGWVFLWFVAGEKTTG). Residues 20–356 (FNHSACATKK…RTIRLRKKEE (337 aa)) lie on the Extracellular side of the membrane. Asn-21 carries an N-linked (GlcNAc...) asparagine glycan. Cys-46 and Cys-126 are disulfide-bonded. The interval 59-78 (ASQLSPTQSPAHKPCSGSQK) is disordered. Ig-like C2-type domains lie at 148–234 (PQRN…WTVR) and 250–352 (PEIL…IRLR). An N-linked (GlcNAc...) asparagine glycan is attached at Asn-151. 3 disulfides stabilise this stretch: Cys-154/Cys-179, Cys-174/Cys-220, and Cys-179/Cys-220. Asn-227 carries an N-linked (GlcNAc...) asparagine glycan. Cysteines 272 and 336 form a disulfide. A glycan (N-linked (GlcNAc...) asparagine) is linked at Asn-344. A helical transmembrane segment spans residues 357 to 377 (VVFVYILLGTALMLVGVLVAA). Residues 378–614 (AFLYWYWIEV…LLLYSDQKRC (237 aa)) are Cytoplasmic-facing. Positions 405 to 558 (KEFDAFVSYS…RFWTQIRYHM (154 aa)) constitute a TIR domain. Residue Glu-492 is part of the active site.

The protein belongs to the interleukin-1 receptor family. In terms of assembly, forms a ternary complex with IL18 and IL18R1. Within this complex, IL18R1 is involved in ligand-binding and IL18RAP in signaling leading to NF-kappa-B and JNK activation.

It localises to the cell membrane. The enzyme catalyses NAD(+) + H2O = ADP-D-ribose + nicotinamide + H(+). Functionally, within the IL18 receptor complex, does not mediate IL18-binding, but involved in IL18-dependent signal transduction, leading to NF-kappa-B and JNK activation. May play a role in IL18-mediated IFNG synthesis from T-helper 1 (Th1) cells. The protein is Interleukin-18 receptor accessory protein of Mus musculus (Mouse).